A 207-amino-acid chain; its full sequence is Holliday junction branch migration complex subunit RuvA (207 aa).

The domain I stretch occupies residues 1 to 64 (MIGRLTGILA…ETSQQLFGFS (64 aa)). The segment at 65 to 142 (SQQDRELFRM…ALDTTPSEHS (78 aa)) is domain II. The segment at 143 to 157 (PTGEGAGIVRVDPVI) is flexible linker. Positions 158-207 (NTNVIIADAESALIGLGYKPTEAAKAVSAAYNDTITTSEDLIRAALKGMI) are domain III.

The protein belongs to the RuvA family. Homotetramer. Forms an RuvA(8)-RuvB(12)-Holliday junction (HJ) complex. HJ DNA is sandwiched between 2 RuvA tetramers; dsDNA enters through RuvA and exits via RuvB. An RuvB hexamer assembles on each DNA strand where it exits the tetramer. Each RuvB hexamer is contacted by two RuvA subunits (via domain III) on 2 adjacent RuvB subunits; this complex drives branch migration. In the full resolvosome a probable DNA-RuvA(4)-RuvB(12)-RuvC(2) complex forms which resolves the HJ.

The protein localises to the cytoplasm. Its function is as follows. The RuvA-RuvB-RuvC complex processes Holliday junction (HJ) DNA during genetic recombination and DNA repair, while the RuvA-RuvB complex plays an important role in the rescue of blocked DNA replication forks via replication fork reversal (RFR). RuvA specifically binds to HJ cruciform DNA, conferring on it an open structure. The RuvB hexamer acts as an ATP-dependent pump, pulling dsDNA into and through the RuvAB complex. HJ branch migration allows RuvC to scan DNA until it finds its consensus sequence, where it cleaves and resolves the cruciform DNA. The protein is Holliday junction branch migration complex subunit RuvA of Saccharophagus degradans (strain 2-40 / ATCC 43961 / DSM 17024).